The sequence spans 837 residues: Protein kintoun (837 aa).

Disordered stretches follow at residues 100–119 (APSSRPGSGGDRGAAPGSHW), 205–224 (LPGVIPARPDGEPKGPLPDF), 230–249 (YPAAPGPRAPSPPEAALQPA), and 363–515 (AAAP…GPGT). A compositionally biased stretch (pro residues) spans 233–242 (APGPRAPSPP). The segment covering 428-442 (GEERVPKPGEQDLSR) has biased composition (basic and acidic residues). The span at 445 to 459 (GSPPGSVEEPSPGGE) shows a compositional bias: low complexity. 2 positions are modified to phosphoserine: Ser461 and Ser467. Positions 484–498 (ESARGDSSVETREES) are enriched in basic and acidic residues. Ser640, Ser641, and Ser773 each carry phosphoserine.

The protein belongs to the PIH1 family. Kintoun subfamily. Interacts with CFAP300. Interacts with DNAAF4. Interacts with DNAAF6/PIH1D3. Interacts with DNAI2 and HSPA1A.

It localises to the cytoplasm. The protein localises to the dynein axonemal particle. Functionally, required for cytoplasmic pre-assembly of axonemal dyneins, thereby playing a central role in motility in cilia and flagella. Involved in pre-assembly of dynein arm complexes in the cytoplasm before intraflagellar transport loads them for the ciliary compartment. The polypeptide is Protein kintoun (Homo sapiens (Human)).